Consider the following 506-residue polypeptide: Asparagine--tRNA ligase (506 aa).

Belongs to the class-II aminoacyl-tRNA synthetase family. In terms of assembly, homodimer.

It localises to the cytoplasm. The enzyme catalyses tRNA(Asn) + L-asparagine + ATP = L-asparaginyl-tRNA(Asn) + AMP + diphosphate + H(+). This Onion yellows phytoplasma (strain OY-M) protein is Asparagine--tRNA ligase.